An 86-amino-acid chain; its full sequence is Cytochrome c oxidase subunit 6B1 (86 aa).

Ala-2 is modified (N-acetylalanine). In terms of domain architecture, CHCH spans 27-73; it reads TRNCWQNYLDFHRCQKAMTAKGGDISVCEWYQRVYQSLCPTSWVTDW. Residues 30–40 carry the Cx9C motif motif; that stretch reads CWQNYLDFHRC. 2 disulfides stabilise this stretch: Cys-30-Cys-65 and Cys-40-Cys-54. The Cx10C motif motif lies at 54 to 65; the sequence is CEWYQRVYQSLC.

It belongs to the cytochrome c oxidase subunit 6B family. As to quaternary structure, component of the cytochrome c oxidase (complex IV, CIV), a multisubunit enzyme composed of 14 subunits. The complex is composed of a catalytic core of 3 subunits MT-CO1, MT-CO2 and MT-CO3, encoded in the mitochondrial DNA, and 11 supernumerary subunits COX4I1 (or COX4I2), COX5A, COX5B, COX6A1 (or COX6A2), COX6B1 (or COX6B2), COX6C, COX7A2 (or COX7A1), COX7B, COX7C, COX8A and NDUFA4, which are encoded in the nuclear genome. The complex exists as a monomer or a dimer and forms supercomplexes (SCs) in the inner mitochondrial membrane with NADH-ubiquinone oxidoreductase (complex I, CI) and ubiquinol-cytochrome c oxidoreductase (cytochrome b-c1 complex, complex III, CIII), resulting in different assemblies (supercomplex SCI(1)III(2)IV(1) and megacomplex MCI(2)III(2)IV(2)).

It is found in the mitochondrion inner membrane. It functions in the pathway energy metabolism; oxidative phosphorylation. Component of the cytochrome c oxidase, the last enzyme in the mitochondrial electron transport chain which drives oxidative phosphorylation. The respiratory chain contains 3 multisubunit complexes succinate dehydrogenase (complex II, CII), ubiquinol-cytochrome c oxidoreductase (cytochrome b-c1 complex, complex III, CIII) and cytochrome c oxidase (complex IV, CIV), that cooperate to transfer electrons derived from NADH and succinate to molecular oxygen, creating an electrochemical gradient over the inner membrane that drives transmembrane transport and the ATP synthase. Cytochrome c oxidase is the component of the respiratory chain that catalyzes the reduction of oxygen to water. Electrons originating from reduced cytochrome c in the intermembrane space (IMS) are transferred via the dinuclear copper A center (CU(A)) of subunit 2 and heme A of subunit 1 to the active site in subunit 1, a binuclear center (BNC) formed by heme A3 and copper B (CU(B)). The BNC reduces molecular oxygen to 2 water molecules using 4 electrons from cytochrome c in the IMS and 4 protons from the mitochondrial matrix. The protein is Cytochrome c oxidase subunit 6B1 (COX6B1) of Homo sapiens (Human).